The primary structure comprises 291 residues: Formamidopyrimidine-DNA glycosylase (291 aa).

Pro-2 serves as the catalytic Schiff-base intermediate with DNA. Glu-3 functions as the Proton donor in the catalytic mechanism. Lys-58 (proton donor; for beta-elimination activity) is an active-site residue. Residues His-100, Arg-123, and Lys-166 each contribute to the DNA site. The FPG-type zinc finger occupies Ser-257–Lys-291. Catalysis depends on Arg-281, which acts as the Proton donor; for delta-elimination activity.

It belongs to the FPG family. Monomer. Zn(2+) serves as cofactor.

It carries out the reaction Hydrolysis of DNA containing ring-opened 7-methylguanine residues, releasing 2,6-diamino-4-hydroxy-5-(N-methyl)formamidopyrimidine.. It catalyses the reaction 2'-deoxyribonucleotide-(2'-deoxyribose 5'-phosphate)-2'-deoxyribonucleotide-DNA = a 3'-end 2'-deoxyribonucleotide-(2,3-dehydro-2,3-deoxyribose 5'-phosphate)-DNA + a 5'-end 5'-phospho-2'-deoxyribonucleoside-DNA + H(+). Functionally, involved in base excision repair of DNA damaged by oxidation or by mutagenic agents. Acts as a DNA glycosylase that recognizes and removes damaged bases. Has a preference for oxidized purines, such as 7,8-dihydro-8-oxoguanine (8-oxoG). Has AP (apurinic/apyrimidinic) lyase activity and introduces nicks in the DNA strand. Cleaves the DNA backbone by beta-delta elimination to generate a single-strand break at the site of the removed base with both 3'- and 5'-phosphates. The sequence is that of Formamidopyrimidine-DNA glycosylase from Bartonella quintana (strain Toulouse) (Rochalimaea quintana).